The sequence spans 249 residues: (2S)-[(R)-hydroxy(phenyl)methyl]succinyl-CoA dehydrogenase subunit BbsC (249 aa).

The protein belongs to the short-chain dehydrogenases/reductases (SDR) family. In terms of assembly, heterotetramer composed of 2 inactive BbsC subunits and 2 active BbsD subunits.

It functions in the pathway xenobiotic degradation; toluene degradation. Involved in an anaerobic toluene degradation pathway. Catalytically inactive subunit, which is probably required for the structural and/or regulatory integrity of the catalytic subunit BbsD. This subunit cannot bind NAD(+) or substrate. The sequence is that of (2S)-[(R)-hydroxy(phenyl)methyl]succinyl-CoA dehydrogenase subunit BbsC from Thauera aromatica.